The sequence spans 111 residues: Cytochrome b-c1 complex subunit 7 (111 aa).

Residue A2 is modified to N-acetylalanine. K19 bears the N6-acetyllysine mark. K78 is subject to N6-acetyllysine; alternate. K78 carries the post-translational modification N6-succinyllysine; alternate. N6-acetyllysine is present on K83. The residue at position 88 (K88) is an N6-acetyllysine; alternate. K88 bears the N6-succinyllysine; alternate mark. Position 96 is an N6-acetyllysine (K96).

The protein belongs to the UQCRB/QCR7 family. As to quaternary structure, component of the ubiquinol-cytochrome c oxidoreductase (cytochrome b-c1 complex, complex III, CIII), a multisubunit enzyme composed of 11 subunits. The complex is composed of 3 respiratory subunits cytochrome b, cytochrome c1 and Rieske protein UQCRFS1, 2 core protein subunits UQCRC1/QCR1 and UQCRC2/QCR2, and 6 low-molecular weight protein subunits UQCRH/QCR6, UQCRB/QCR7, UQCRQ/QCR8, UQCR10/QCR9, UQCR11/QCR10 and subunit 9, the cleavage product of Rieske protein UQCRFS1. The complex exists as an obligatory dimer and forms supercomplexes (SCs) in the inner mitochondrial membrane with NADH-ubiquinone oxidoreductase (complex I, CI) and cytochrome c oxidase (complex IV, CIV), resulting in different assemblies (supercomplex SCI(1)III(2)IV(1) and megacomplex MCI(2)III(2)IV(2)).

It localises to the mitochondrion inner membrane. Component of the ubiquinol-cytochrome c oxidoreductase, a multisubunit transmembrane complex that is part of the mitochondrial electron transport chain which drives oxidative phosphorylation. The respiratory chain contains 3 multisubunit complexes succinate dehydrogenase (complex II, CII), ubiquinol-cytochrome c oxidoreductase (cytochrome b-c1 complex, complex III, CIII) and cytochrome c oxidase (complex IV, CIV), that cooperate to transfer electrons derived from NADH and succinate to molecular oxygen, creating an electrochemical gradient over the inner membrane that drives transmembrane transport and the ATP synthase. The cytochrome b-c1 complex catalyzes electron transfer from ubiquinol to cytochrome c, linking this redox reaction to translocation of protons across the mitochondrial inner membrane, with protons being carried across the membrane as hydrogens on the quinol. In the process called Q cycle, 2 protons are consumed from the matrix, 4 protons are released into the intermembrane space and 2 electrons are passed to cytochrome c. The chain is Cytochrome b-c1 complex subunit 7 (UQCRB) from Bos taurus (Bovine).